The following is a 770-amino-acid chain: Protein PAT1 homolog 1 (770 aa).

The interval methionine 1–valine 42 is disordered. A region A; interaction with DDX6/RCK region spans residues methionine 1–glutamate 84. The interval methionine 1 to arginine 397 is involved in nuclear foci localization. The segment covering leucine 7 to asparagine 33 has biased composition (acidic residues). Positions asparagine 85 to histidine 388 are region N; interaction with decapping machinery. A Nuclear export signal motif is present at residues leucine 86 to isoleucine 95. A Phosphoserine modification is found at serine 177. Threonine 178 carries the post-translational modification Phosphothreonine. Phosphoserine is present on residues serine 179 and serine 184. Threonine 194 is subject to Phosphothreonine. 3 positions are modified to asymmetric dimethylarginine: arginine 217, arginine 223, and arginine 263. Positions arginine 223 to arginine 397 are involved in RNA-binding. Serine 278 bears the Phosphoserine mark. Residue arginine 284 is modified to Asymmetric dimethylarginine. Disordered stretches follow at residues serine 320–glutamine 341 and glutamine 369–aspartate 394. The span at alanine 321 to glycine 337 shows a compositional bias: pro residues. A compositionally biased stretch (low complexity) spans glutamine 369 to asparagine 380. Arginine 385 is modified (omega-N-methylarginine). Residues arginine 385–aspartate 394 are compositionally biased toward basic and acidic residues. The segment at arginine 389 to glutamate 448 is region H. Positions lysine 398–arginine 770 are involved in nuclear speckle localization. Residues methionine 449 to arginine 770 form a region C region.

This sequence belongs to the PAT1 family. In terms of assembly, interacts (via region A) with DDX6/RCK. Interacts (via region H and region C) with LSM1 and LSM4. Interacts (via region N) with DCP1A, DCP2, EDC3, EDC4 and XRN1. Interacts with the CCR4-NOT complex. Interacts with the Lsm-containing SMN-Sm protein complex. Interacts with EIF4ENIF1/4E-T.

The protein resides in the cytoplasm. It localises to the P-body. Its subcellular location is the nucleus. It is found in the PML body. The protein localises to the nucleus speckle. Functionally, RNA-binding protein involved in deadenylation-dependent decapping of mRNAs, leading to the degradation of mRNAs. Acts as a scaffold protein that connects deadenylation and decapping machinery. Required for cytoplasmic mRNA processing body (P-body) assembly. The chain is Protein PAT1 homolog 1 (Patl1) from Rattus norvegicus (Rat).